The primary structure comprises 177 residues: Immunity protein CdiI-YPIII (177 aa).

In terms of assembly, interacts with the C-terminal DNase fragment (residues 954-1077) of cognate toxin CdiA-YPIII.

Immunity protein component of a toxin-immunity protein module, which functions as a cellular contact-dependent growth inhibition (CDI) system. CDI modules allow bacteria to communicate with and inhibit the growth of closely related neighboring bacteria in a contact-dependent fashion. Neutralizes the toxic activity of cognate toxin CdiA-YPIII (residues 954-1077). Does not inhibit toxic activity of CdiA from other toxin-immunity modules. The protein is Immunity protein CdiI-YPIII of Yersinia pseudotuberculosis serotype O:3 (strain YPIII).